Consider the following 506-residue polypeptide: Glutamate--tRNA ligase (506 aa).

A 'HIGH' region motif is present at residues Pro-9 to Gly-19. The 'KMSKS' region motif lies at Lys-251 to Arg-255. Residue Lys-254 participates in ATP binding.

This sequence belongs to the class-I aminoacyl-tRNA synthetase family. Glutamate--tRNA ligase type 1 subfamily. As to quaternary structure, monomer.

Its subcellular location is the cytoplasm. The enzyme catalyses tRNA(Glu) + L-glutamate + ATP = L-glutamyl-tRNA(Glu) + AMP + diphosphate. Functionally, catalyzes the attachment of glutamate to tRNA(Glu) in a two-step reaction: glutamate is first activated by ATP to form Glu-AMP and then transferred to the acceptor end of tRNA(Glu). The protein is Glutamate--tRNA ligase of Treponema denticola (strain ATCC 35405 / DSM 14222 / CIP 103919 / JCM 8153 / KCTC 15104).